The primary structure comprises 225 residues: UPF0758 protein NGK_1225 (225 aa).

An MPN domain is found at 102–224 (TLSDPDTVAD…VRSFRQLGLM (123 aa)). Zn(2+)-binding residues include histidine 173, histidine 175, and aspartate 186. Residues 173–186 (HNHPGGSPEPSQED) carry the JAMM motif motif.

The protein belongs to the UPF0758 family.

The polypeptide is UPF0758 protein NGK_1225 (Neisseria gonorrhoeae (strain NCCP11945)).